A 407-amino-acid polypeptide reads, in one-letter code: Multifunctional CCA protein (407 aa).

Positions 8 and 11 each coordinate ATP. 2 residues coordinate CTP: G8 and R11. Residues D21 and D23 each coordinate Mg(2+). ATP contacts are provided by R91, R137, and R140. CTP contacts are provided by R91, R137, and R140. In terms of domain architecture, HD spans 228–329 (TGMHTLMVSQ…IKIFDKMDLW (102 aa)).

It belongs to the tRNA nucleotidyltransferase/poly(A) polymerase family. Bacterial CCA-adding enzyme type 1 subfamily. As to quaternary structure, monomer. Can also form homodimers and oligomers. It depends on Mg(2+) as a cofactor. Ni(2+) serves as cofactor.

The catalysed reaction is a tRNA precursor + 2 CTP + ATP = a tRNA with a 3' CCA end + 3 diphosphate. It carries out the reaction a tRNA with a 3' CCA end + 2 CTP + ATP = a tRNA with a 3' CCACCA end + 3 diphosphate. In terms of biological role, catalyzes the addition and repair of the essential 3'-terminal CCA sequence in tRNAs without using a nucleic acid template. Adds these three nucleotides in the order of C, C, and A to the tRNA nucleotide-73, using CTP and ATP as substrates and producing inorganic pyrophosphate. tRNA 3'-terminal CCA addition is required both for tRNA processing and repair. Also involved in tRNA surveillance by mediating tandem CCA addition to generate a CCACCA at the 3' terminus of unstable tRNAs. While stable tRNAs receive only 3'-terminal CCA, unstable tRNAs are marked with CCACCA and rapidly degraded. The sequence is that of Multifunctional CCA protein from Aliivibrio salmonicida (strain LFI1238) (Vibrio salmonicida (strain LFI1238)).